Consider the following 928-residue polypeptide: Serine/threonine-protein kinase atg1 (928 aa).

Residues 6–315 form the Protein kinase domain; it reads YTRLDEIGRG…FPEFFENEVI (310 aa). ATP contacts are provided by residues 12–20 and Lys-35; that span reads IGRGSFATV. Asp-149 serves as the catalytic Proton acceptor. Disordered stretches follow at residues 318–470 and 544–571; these read PIPG…EQER and FSGR…PTSA. The segment covering 359–371 has biased composition (basic and acidic residues); it reads TRREREVNREDVY. Polar residues predominate over residues 437-452; sequence TTTAIERQRSRNTYSE. 2 stretches are compositionally biased toward basic and acidic residues: residues 459–470 and 548–564; these read QPADKLKEEQER and SRAD…ERRY.

This sequence belongs to the protein kinase superfamily. Ser/Thr protein kinase family. APG1/unc-51/ULK1 subfamily. Homodimer. Forms a ternary complex with ATG13 and ATG17.

It is found in the cytoplasm. The protein localises to the preautophagosomal structure membrane. The catalysed reaction is L-seryl-[protein] + ATP = O-phospho-L-seryl-[protein] + ADP + H(+). The enzyme catalyses L-threonyl-[protein] + ATP = O-phospho-L-threonyl-[protein] + ADP + H(+). In terms of biological role, serine/threonine protein kinase involved in the cytoplasm to vacuole transport (Cvt) and found to be essential in autophagy, where it is required for the formation of autophagosomes. Involved in the clearance of protein aggregates which cannot be efficiently cleared by the proteasome. Required for selective autophagic degradation of the nucleus (nucleophagy) as well as for mitophagy which contributes to regulate mitochondrial quantity and quality by eliminating the mitochondria to a basal level to fulfill cellular energy requirements and preventing excess ROS production. Also involved in endoplasmic reticulum-specific autophagic process, in selective removal of ER-associated degradation (ERAD) substrates. Plays a key role in ATG9 and ATG23 cycling through the pre-autophagosomal structure and is necessary to promote ATG18 binding to ATG9 through phosphorylation of ATG9. Catalyzes phosphorylation of ATG4, decreasing the interaction between ATG4 and ATG8 and impairing deconjugation of PE-conjugated forms of ATG8. The sequence is that of Serine/threonine-protein kinase atg1 from Aspergillus clavatus (strain ATCC 1007 / CBS 513.65 / DSM 816 / NCTC 3887 / NRRL 1 / QM 1276 / 107).